An 866-amino-acid chain; its full sequence is Glycoprotein gp2 (866 aa).

The first 25 residues, Met1 to Thr25, serve as a signal peptide directing secretion. 2 disordered regions span residues Thr24–Thr185 and Thr319–Gln619. The N-linked (GlcNAc...) asparagine; by host glycan is linked to Asn48. Over residues Thr319 to Thr442 the composition is skewed to low complexity. Polar residues predominate over residues Ala443–Phe463. Low complexity-rich tracts occupy residues Thr464 to Thr499 and Thr514 to Pro526. A glycan (N-linked (GlcNAc...) asparagine; by host) is linked at Asn518. Over residues Phe535 to Ala561 the composition is skewed to polar residues. Residues His564–Gly574 are compositionally biased toward basic residues. N-linked (GlcNAc...) asparagine; by host glycosylation is found at Asn611 and Asn659. A helical transmembrane segment spans residues Phe835–Tyr855.

It is found in the virion membrane. Functionally, virulence factor. This Equus caballus (Horse) protein is Glycoprotein gp2.